A 503-amino-acid chain; its full sequence is Aminoaldehyde dehydrogenase 2, peroxisomal (503 aa).

Na(+)-binding residues include I28 and D99. NAD(+) contacts are provided by W161 and K185. L189 is a Na(+) binding site. Position 239 (S239) interacts with NAD(+). E260 acts as the Proton acceptor in catalysis. C294 serves as the catalytic Nucleophile. The short motif at A501–L503 is the Microbody targeting signal element.

This sequence belongs to the aldehyde dehydrogenase family. Forms homodimers.

The protein resides in the peroxisome. It catalyses the reaction 3-aminopropanal + NAD(+) + H2O = beta-alanine + NADH + 2 H(+). It carries out the reaction 4-aminobutanal + NAD(+) + H2O = 4-aminobutanoate + NADH + 2 H(+). The enzyme catalyses 4-guanidinobutanal + NAD(+) + H2O = 4-guanidinobutanoate + NADH + 2 H(+). The protein operates within amine and polyamine biosynthesis; betaine biosynthesis via choline pathway; betaine from betaine aldehyde: step 1/1. Dehydrogenase that catalyzes the oxidation of several aminoaldehydes. Metabolizes and detoxifies aldehyde products of polyamine degradation to non-toxic amino acids. Catalyzes the oxidation of 3-aminopropanal to beta-alanine. Catalyzes the oxidation of 4-aminobutanal to 4-aminobutanoate. Catalyzes the oxidation of 4-guanidinobutanal to 4-guanidinobutanoate. This chain is Aminoaldehyde dehydrogenase 2, peroxisomal, found in Pisum sativum (Garden pea).